Here is a 103-residue protein sequence, read N- to C-terminus: UPF0145 protein pXO2-45/BXB0052/GBAA_pXO2_0052 (103 aa).

It belongs to the UPF0145 family.

This is UPF0145 protein pXO2-45/BXB0052/GBAA_pXO2_0052 from Bacillus anthracis.